A 679-amino-acid chain; its full sequence is Methionine--tRNA ligase (679 aa).

Residues 14–24 carry the 'HIGH' region motif; sequence PYANGSIHLGH. The Zn(2+) site is built by cysteine 145, cysteine 148, cysteine 158, and cysteine 161. Positions 331 to 335 match the 'KMSKS' region motif; it reads KMSKS. Lysine 334 contacts ATP. The tRNA-binding domain occupies 577-679; the sequence is TFAAVDLRIA…NGAKPGQRVM (103 aa).

The protein belongs to the class-I aminoacyl-tRNA synthetase family. MetG type 1 subfamily. As to quaternary structure, homodimer. The cofactor is Zn(2+).

It is found in the cytoplasm. The enzyme catalyses tRNA(Met) + L-methionine + ATP = L-methionyl-tRNA(Met) + AMP + diphosphate. In terms of biological role, is required not only for elongation of protein synthesis but also for the initiation of all mRNA translation through initiator tRNA(fMet) aminoacylation. This chain is Methionine--tRNA ligase, found in Stutzerimonas stutzeri (strain A1501) (Pseudomonas stutzeri).